The following is a 476-amino-acid chain: ATP synthase subunit beta (476 aa).

161 to 168 (GGAGVGKT) is an ATP binding site.

This sequence belongs to the ATPase alpha/beta chains family. In terms of assembly, F-type ATPases have 2 components, CF(1) - the catalytic core - and CF(0) - the membrane proton channel. CF(1) has five subunits: alpha(3), beta(3), gamma(1), delta(1), epsilon(1). CF(0) has three main subunits: a(1), b(2) and c(9-12). The alpha and beta chains form an alternating ring which encloses part of the gamma chain. CF(1) is attached to CF(0) by a central stalk formed by the gamma and epsilon chains, while a peripheral stalk is formed by the delta and b chains.

The protein resides in the cell membrane. The enzyme catalyses ATP + H2O + 4 H(+)(in) = ADP + phosphate + 5 H(+)(out). In terms of biological role, produces ATP from ADP in the presence of a proton gradient across the membrane. The catalytic sites are hosted primarily by the beta subunits. This chain is ATP synthase subunit beta, found in Mycolicibacterium gilvum (strain PYR-GCK) (Mycobacterium gilvum (strain PYR-GCK)).